Consider the following 539-residue polypeptide: CTP synthase (539 aa).

Residues Met1–Leu267 are amidoligase domain. Position 15 (Ser15) interacts with CTP. Position 15 (Ser15) interacts with UTP. ATP is bound by residues Ser16–Leu21 and Asp73. Mg(2+) is bound by residues Asp73 and Glu141. Residues Asp148–Glu150, Lys188–Gln193, and Lys224 each bind CTP. UTP is bound by residues Lys188–Gln193 and Lys224. The region spanning Thr292 to Lys536 is the Glutamine amidotransferase type-1 domain. Gly359 provides a ligand contact to L-glutamine. Cys386 acts as the Nucleophile; for glutamine hydrolysis in catalysis. Residues Leu387–Gln390, Glu410, and Arg464 each bind L-glutamine. Catalysis depends on residues His509 and Glu511.

Belongs to the CTP synthase family. Homotetramer.

It catalyses the reaction UTP + L-glutamine + ATP + H2O = CTP + L-glutamate + ADP + phosphate + 2 H(+). It carries out the reaction L-glutamine + H2O = L-glutamate + NH4(+). The enzyme catalyses UTP + NH4(+) + ATP = CTP + ADP + phosphate + 2 H(+). The protein operates within pyrimidine metabolism; CTP biosynthesis via de novo pathway; CTP from UDP: step 2/2. Its activity is regulated as follows. Allosterically activated by GTP, when glutamine is the substrate; GTP has no effect on the reaction when ammonia is the substrate. The allosteric effector GTP functions by stabilizing the protein conformation that binds the tetrahedral intermediate(s) formed during glutamine hydrolysis. Inhibited by the product CTP, via allosteric rather than competitive inhibition. Functionally, catalyzes the ATP-dependent amination of UTP to CTP with either L-glutamine or ammonia as the source of nitrogen. Regulates intracellular CTP levels through interactions with the four ribonucleotide triphosphates. This Wolbachia sp. subsp. Brugia malayi (strain TRS) protein is CTP synthase.